The sequence spans 276 residues: ATP synthase subunit a 2 (276 aa).

5 helical membrane passes run 45–65 (AVHV…VWLF), 105–125 (VIAP…LMDL), 154–173 (VNVT…YYSI), 226–246 (LLFI…SVPW), and 247–267 (AIFH…LTIV).

Belongs to the ATPase A chain family. As to quaternary structure, F-type ATPases have 2 components, CF(1) - the catalytic core - and CF(0) - the membrane proton channel. CF(1) has five subunits: alpha(3), beta(3), gamma(1), delta(1), epsilon(1). CF(0) has three main subunits: a(1), b(2) and c(9-12). The alpha and beta chains form an alternating ring which encloses part of the gamma chain. CF(1) is attached to CF(0) by a central stalk formed by the gamma and epsilon chains, while a peripheral stalk is formed by the delta and b chains.

The protein resides in the cell inner membrane. Its function is as follows. Key component of the proton channel; it plays a direct role in the translocation of protons across the membrane. The chain is ATP synthase subunit a 2 from Hahella chejuensis (strain KCTC 2396).